Consider the following 486-residue polypeptide: Transcription factor bHLH49 (486 aa).

Positions 1–17 (MDLSAKDEFSAEKRNPD) are enriched in basic and acidic residues. Disordered stretches follow at residues 1 to 30 (MDLS…GDWR) and 194 to 300 (KEST…KDGY). Polar residues-rich tracts occupy residues 198–221 (VRSS…TQSS) and 243–254 (QKNSEAAQSHRS). Residues 273–293 (QSPNSPGKKSNSGKQQGKQSS) are compositionally biased toward low complexity. The bHLH domain maps to 309–359 (QATNSHSLAERVRREKISERMKFLQDLVPGCNKVTGKAVMLDEIINYVQSL).

In terms of assembly, homodimer. Interacts with IBH1. Expressed constitutively in roots, stems, and flowers.

It is found in the nucleus. In terms of biological role, transcriptional activator involved in cell elongation. Regulates the expression of a subset of genes involved in cell expansion by binding to the G-box motif. The chain is Transcription factor bHLH49 (BHLH49) from Arabidopsis thaliana (Mouse-ear cress).